The following is a 372-amino-acid chain: Glutamate 5-kinase (372 aa).

Residue Lys-9 participates in ATP binding. The substrate site is built by Ser-49, Asp-136, and Asn-148. ATP contacts are provided by residues 168 to 169 (TD) and 210 to 216 (TGGMKSK). Residues 276–360 (EGKVFIDDGA…PAIEVIHRDS (85 aa)) enclose the PUA domain.

This sequence belongs to the glutamate 5-kinase family.

Its subcellular location is the cytoplasm. The catalysed reaction is L-glutamate + ATP = L-glutamyl 5-phosphate + ADP. The protein operates within amino-acid biosynthesis; L-proline biosynthesis; L-glutamate 5-semialdehyde from L-glutamate: step 1/2. Its function is as follows. Catalyzes the transfer of a phosphate group to glutamate to form L-glutamate 5-phosphate. In Oceanobacillus iheyensis (strain DSM 14371 / CIP 107618 / JCM 11309 / KCTC 3954 / HTE831), this protein is Glutamate 5-kinase.